The sequence spans 530 residues: MLETGAIWGITGTTVTSFMFFWAIYKQYVPAHFRAYVERYFHKMIGWISYYVDIKFTEYTDEGLKRSQAYDSIRNYLASKSTALAKRLKANETKNSKSLVFSMDDHEEIEDEFEGVKVKWYSNVKVIQPQSNYGQRSSEERRHFTLSFHRRHRGMIIETYLDHVLREGKAIGLMNRERKLYTNNSSQEWYPWRSGKWSNVPFHHPATFETLAMDPEKKEGIKKDLIKFSKGKDYYKKVGKPWKRGYLLFGPPGTGKSTMIAAIANFLDYDVYDLELTTVKDNSELKKLLLDTTSKSIIVIEDIDCSLDLTGQRKKKKEEDEEEDGEEKKEGEKKPKVDDKQSKVTLSGLLNSIDGLWSACSGEKIIVFTTNFVDKLDPALIRRGRMDNHIEMSYCKFEAFKVLAKNYLEIETHDLYGEIERKLEETDMSPADVAETLMPKSDEEDADICIKRLVKTLEEEKEKARKLAEEEEKKKAEKEAKKMKKAEEAEEKKKKTEEDEKKEKVKAKEENGNVSQQNGNSIDLNKKSDS.

The helical transmembrane segment at 5–25 threads the bilayer; the sequence is GAIWGITGTTVTSFMFFWAIY. Position 250-257 (250-257) interacts with ATP; it reads GPPGTGKS. Disordered regions lie at residues 312-339 and 463-530; these read QRKKKKEEDEEEDGEEKKEGEKKPKVDD and KARK…KSDS. Composition is skewed to basic and acidic residues over residues 326–339 and 463–511; these read EEKKEGEKKPKVDD and KARK…KEEN. Residues 512-523 are compositionally biased toward polar residues; it reads GNVSQQNGNSID.

Belongs to the AAA ATPase family. BCS1 subfamily. Requires Mg(2+) as cofactor.

Its subcellular location is the membrane. It catalyses the reaction ATP + H2O = ADP + phosphate + H(+). The sequence is that of AAA-ATPase At3g28510 from Arabidopsis thaliana (Mouse-ear cress).